Reading from the N-terminus, the 145-residue chain is Small ribosomal subunit protein uS9 (145 aa).

It belongs to the universal ribosomal protein uS9 family.

It localises to the cytoplasm. The sequence is that of Small ribosomal subunit protein uS9 (RPS16) from Gossypium hirsutum (Upland cotton).